Consider the following 127-residue polypeptide: Major sperm protein 38 (127 aa).

At A2 the chain carries N-acetylalanine. One can recognise an MSP domain in the interval 9-126 (DIQTQPGTKI…RRKNLPIEYN (118 aa)).

As to expression, sperm.

The protein resides in the cell projection. Its subcellular location is the pseudopodium. The protein localises to the cytoplasm. It is found in the cytoskeleton. Its function is as follows. Central component in molecular interactions underlying sperm crawling. Forms an extensive filament system that extends from sperm villipoda, along the leading edge of the pseudopod. This Caenorhabditis elegans protein is Major sperm protein 38 (msp-38).